We begin with the raw amino-acid sequence, 334 residues long: F420-dependent glucose-6-phosphate dehydrogenase (334 aa).

Asp38 is a binding site for coenzyme F420-(gamma-Glu)n. His39 acts as the Proton donor in catalysis. Residues Thr75 and 106–107 (TG) contribute to the coenzyme F420-(gamma-Glu)n site. The Proton acceptor role is filled by Glu108. Coenzyme F420-(gamma-Glu)n is bound by residues Asn111, 175-176 (GG), and 178-179 (LV). Residues Thr193, Lys196, Lys257, and Arg281 each coordinate substrate.

It belongs to the F420-dependent glucose-6-phosphate dehydrogenase family. Homodimer.

The enzyme catalyses oxidized coenzyme F420-(gamma-L-Glu)(n) + D-glucose 6-phosphate + H(+) = 6-phospho-D-glucono-1,5-lactone + reduced coenzyme F420-(gamma-L-Glu)(n). Its function is as follows. Catalyzes the coenzyme F420-dependent oxidation of glucose 6-phosphate (G6P) to 6-phosphogluconolactone. The sequence is that of F420-dependent glucose-6-phosphate dehydrogenase from Kribbella flavida (strain DSM 17836 / JCM 10339 / NBRC 14399).